The following is a 489-amino-acid chain: N-succinylglutamate 5-semialdehyde dehydrogenase (489 aa).

216 to 221 (GSAATG) lines the NAD(+) pocket. Active-site residues include Glu-239 and Cys-273.

This sequence belongs to the aldehyde dehydrogenase family. AstD subfamily.

The catalysed reaction is N-succinyl-L-glutamate 5-semialdehyde + NAD(+) + H2O = N-succinyl-L-glutamate + NADH + 2 H(+). Its pathway is amino-acid degradation; L-arginine degradation via AST pathway; L-glutamate and succinate from L-arginine: step 4/5. Catalyzes the NAD-dependent reduction of succinylglutamate semialdehyde into succinylglutamate. The polypeptide is N-succinylglutamate 5-semialdehyde dehydrogenase (Erwinia tasmaniensis (strain DSM 17950 / CFBP 7177 / CIP 109463 / NCPPB 4357 / Et1/99)).